Reading from the N-terminus, the 272-residue chain is Arylesterase (272 aa).

Residues 21–253 (KPVLFSHGWL…LKVYKDAPHG (233 aa)) form the AB hydrolase-1 domain. W29 lines the acetate pocket. The active site involves S95. An acetate-binding site is contributed by M96. Active-site residues include D223 and H252.

Belongs to the AB hydrolase superfamily. Bacterial non-heme haloperoxidase / perhydrolase family. Dimer of trimers.

The enzyme catalyses a phenyl acetate + H2O = a phenol + acetate + H(+). It catalyses the reaction peracetic acid + H2O = acetate + H2O2 + H(+). The catalysed reaction is a percarboxylic acid + H2O = a carboxylate + H2O2 + H(+). Its function is as follows. Hydrolyzes phenolic esters, such as phenyl acetate, nitrophenyl acetate and naphtyl acetate. Can act on a wide range of esters, but reaction rate and enantioselectivity differ significantly depending on the substrate. Shows a preference for esters with small acyl groups. Also shows low perhydrolase activity, and catalyzes the reversible formation of peroxycarboxylic acids from carboxylic acids and hydrogen peroxide. In vitro, enzyme-generated peracetic acid oxidizes bromide ion to bromonium, which reacts with monochlorodimedone to form bromochlorodimedone. This chain is Arylesterase, found in Pseudomonas fluorescens.